Here is a 609-residue protein sequence, read N- to C-terminus: Aspartate--tRNA(Asp/Asn) ligase (609 aa).

E177 lines the L-aspartate pocket. The interval 201–204 is aspartate; it reads QLFK. An L-aspartate-binding site is contributed by R223. ATP-binding positions include 223 to 225 and Q232; that span reads RDE. H461 is a binding site for L-aspartate. E499 provides a ligand contact to ATP. R506 contacts L-aspartate. ATP is bound at residue 551–554; sequence GVDR.

Belongs to the class-II aminoacyl-tRNA synthetase family. Type 1 subfamily. As to quaternary structure, homodimer.

Its subcellular location is the cytoplasm. The enzyme catalyses tRNA(Asx) + L-aspartate + ATP = L-aspartyl-tRNA(Asx) + AMP + diphosphate. Aspartyl-tRNA synthetase with relaxed tRNA specificity since it is able to aspartylate not only its cognate tRNA(Asp) but also tRNA(Asn). Reaction proceeds in two steps: L-aspartate is first activated by ATP to form Asp-AMP and then transferred to the acceptor end of tRNA(Asp/Asn). This Synechococcus sp. (strain CC9605) protein is Aspartate--tRNA(Asp/Asn) ligase.